A 170-amino-acid polypeptide reads, in one-letter code: uncharacterized protein (170 aa).

A run of 3 helical transmembrane segments spans residues Ile-31–Phe-51, Leu-58–Phe-78, and Ile-133–Phe-153.

It to M.jannaschii MJ0554 and MJ0587.

The protein resides in the cell membrane. This is an uncharacterized protein from Methanocaldococcus jannaschii (strain ATCC 43067 / DSM 2661 / JAL-1 / JCM 10045 / NBRC 100440) (Methanococcus jannaschii).